The sequence spans 63 residues: Large ribosomal subunit protein bL28 (63 aa).

This sequence belongs to the bacterial ribosomal protein bL28 family.

The protein is Large ribosomal subunit protein bL28 of Petrotoga mobilis (strain DSM 10674 / SJ95).